The following is a 273-amino-acid chain: MSTYQPEDTRKVTTHRLIEMKSRGEKISMLTAYDYSMAKLVDEAGMDVILVGDSASNVMAGNVTTLPITLDQMIYHGKSVVKAVKRALVVVDLPFGSYQGNSKEALCSAIRVMKETHADCIKLEGGEEVRESIVRILSAGIPIMGHLGLMPQSINKFGTYNVRAKEEAEAEKLLQDAHLLEELGCFALVLEKIPAELATRVASELSIPVIGIGAGGGVDGQVLVMHDMLGITEGFSPRFLRRYANLANEIDRALKHYIADVKSMDFPNKDEQY.

The Mg(2+) site is built by Asp-53 and Asp-92. 3-methyl-2-oxobutanoate contacts are provided by residues 53 to 54 (DS), Asp-92, and Lys-122. Mg(2+) is bound at residue Glu-124. Glu-191 (proton acceptor) is an active-site residue.

The protein belongs to the PanB family. In terms of assembly, homodecamer; pentamer of dimers. It depends on Mg(2+) as a cofactor.

The protein resides in the cytoplasm. It carries out the reaction 3-methyl-2-oxobutanoate + (6R)-5,10-methylene-5,6,7,8-tetrahydrofolate + H2O = 2-dehydropantoate + (6S)-5,6,7,8-tetrahydrofolate. It functions in the pathway cofactor biosynthesis; (R)-pantothenate biosynthesis; (R)-pantoate from 3-methyl-2-oxobutanoate: step 1/2. Catalyzes the reversible reaction in which hydroxymethyl group from 5,10-methylenetetrahydrofolate is transferred onto alpha-ketoisovalerate to form ketopantoate. The sequence is that of 3-methyl-2-oxobutanoate hydroxymethyltransferase from Porphyromonas gingivalis (strain ATCC 33277 / DSM 20709 / CIP 103683 / JCM 12257 / NCTC 11834 / 2561).